The primary structure comprises 634 residues: Carbon monoxide dehydrogenase 2 (634 aa).

[4Fe-4S] cluster contacts are provided by Cys44, Cys53, Cys56, Cys61, and Cys73. The [Ni-4Fe-5S] cluster site is built by His264, Cys343, Cys453, Cys484, and Cys525.

This sequence belongs to the Ni-containing carbon monoxide dehydrogenase family. Homodimer. Requires [4Fe-4S] cluster as cofactor. It depends on [Ni-4Fe-5S] cluster as a cofactor.

The enzyme catalyses CO + 2 oxidized [2Fe-2S]-[ferredoxin] + H2O = 2 reduced [2Fe-2S]-[ferredoxin] + CO2 + 2 H(+). Its function is as follows. CODH oxidizes carbon monoxide coupled, via CooF, to the reduction of a hydrogen cation by a hydrogenase (possibly CooH). In Methanosarcina mazei (strain ATCC BAA-159 / DSM 3647 / Goe1 / Go1 / JCM 11833 / OCM 88) (Methanosarcina frisia), this protein is Carbon monoxide dehydrogenase 2 (cooS2).